The chain runs to 706 residues: SPX domain-containing membrane protein OsI_32082 (706 aa).

An SPX domain is found at 2–145 (VNFSNKLTKD…GYKFTDYYVR (144 aa)). The next 6 membrane-spanning stretches (helical) occupy residues 251 to 271 (MSLVLNLANTFLYMVNTYIVV), 281 to 301 (LGAAATACGAVIGSMAVAQVF), 318 to 338 (LLFSSVVLLLGNVMYAMAFDL), 340 to 359 (SLTILLLGRVLCGMGSARAV), 378 to 398 (AAFVSASALGMACGPALAGLL), and 414 to 434 (LPGWIMAFGWLVYLIWLWISF). Positions 475-498 (SEQDEEDDNGDEEHNETLSSSTTT) are disordered. A compositionally biased stretch (acidic residues) spans 476-488 (EQDEEDDNGDEEH). 5 helical membrane-spanning segments follow: residues 520-540 (LLIYFMLKYAMEILLAESSVV), 554-574 (VFLAVLGLSVLPVNAIVGTYI), 583-603 (ILVASEMALLAGVMLSFKLTV), 611-631 (VCSAVLTFVSAEVVEGVNLSL), and 678-698 (LLNATLLPALLVCVASIAATL).

It belongs to the major facilitator superfamily.

The protein resides in the membrane. The polypeptide is SPX domain-containing membrane protein OsI_32082 (Oryza sativa subsp. indica (Rice)).